The sequence spans 345 residues: UbiA prenyltransferase domain-containing protein 1 (345 aa).

The next 8 helical transmembrane spans lie at 60–80 (LALR…GTAI), 90–110 (LLLF…GNLV), 141–161 (VRFG…LYFI), 169–189 (LALI…GIGF), 213–233 (AVQV…LALS), 251–273 (QAGI…YNLL), 285–305 (ATRY…AFSL), and 324–344 (LNLL…AGSL).

It belongs to the UbiA prenyltransferase family.

The protein resides in the endoplasmic reticulum membrane. Its subcellular location is the golgi apparatus membrane. It is found in the mitochondrion membrane. It carries out the reaction menadiol + (2E,6E,10E)-geranylgeranyl diphosphate = menaquinol-4 + diphosphate. The enzyme catalyses all-trans-decaprenyl diphosphate + 4-hydroxybenzoate = 4-hydroxy-3-(all-trans-decaprenyl)benzoate + diphosphate. The protein operates within quinol/quinone metabolism; menaquinone biosynthesis. It participates in cofactor biosynthesis; ubiquinone biosynthesis. Prenyltransferase that mediates the formation of menaquinone-4 (MK-4) and coenzyme Q10. MK-4 is a vitamin K2 isoform required for endothelial cell development. Mediates the conversion of phylloquinone (PK) into MK-4, probably by cleaving the side chain of phylloquinone (PK) to release 2-methyl-1,4-naphthoquinone (menadione; K3) and then prenylating it with geranylgeranyl pyrophosphate (GGPP) to form MK-4. Also plays a role in cardiovascular development independently of MK-4 biosynthesis, by acting as a coenzyme Q10 biosynthetic enzyme: coenzyme Q10, also named ubiquinone, plays an important antioxidant role in the cardiovascular system. Mediates biosynthesis of coenzyme Q10 in the Golgi membrane, leading to protect cardiovascular tissues from NOS3/eNOS-dependent oxidative stress. This Xenopus tropicalis (Western clawed frog) protein is UbiA prenyltransferase domain-containing protein 1 (ubiad1).